The sequence spans 628 residues: LRR receptor kinase SERK2 (628 aa).

The signal sequence occupies residues 1-31 (MAEARLLRRRRLCLAVPFVWVVAVAVSRVGA). LRR repeat units follow at residues 97–121 (LKNL…LGNL), 123–144 (NLVS…TLGQ), 145–169 (LYKL…LTNI), and 170–194 (TTLQ…SFSL). 6 N-linked (GlcNAc...) asparagine glycosylation sites follow: Asn109, Asn120, Asn133, Asn155, Asn168, and Asn181. A helical transmembrane segment spans residues 243–263 (AIAGGVAAAAALLFAVPAIGF). Thr303 bears the Phosphothreonine mark. The Protein kinase domain maps to 306 to 593 (FSNKNILGRG…GLAERWEEWQ (288 aa)). ATP is bound at residue 312 to 320 (LGRGGFGKV). Phosphoserine is present on Ser329. Position 334 (Lys334) interacts with ATP. Thr350 carries the phosphothreonine modification. A phosphoserine mark is found at Ser356 and Ser387. The Proton acceptor role is filled by Asp433. A phosphothreonine mark is found at Thr463, Thr466, and Thr472. Position 615 is a phosphoserine (Ser615). Phosphothreonine is present on Thr616. Ser625 bears the Phosphoserine mark.

The protein belongs to the protein kinase superfamily. Ser/Thr protein kinase family. In terms of assembly, interacts with BRI1. Interacts with XA21, XA26/XA3 and FLS2. Post-translationally, autophosphorylated on serine and threonine residues. In terms of tissue distribution, expressed in flag leaves. Expressed in roots, shoot apex, leaf blades, leaf sheaths, panicles and flowers. Expressed leaves, stems, sheaths and flowers.

Its subcellular location is the cell membrane. The catalysed reaction is L-seryl-[protein] + ATP = O-phospho-L-seryl-[protein] + ADP + H(+). It catalyses the reaction L-threonyl-[protein] + ATP = O-phospho-L-threonyl-[protein] + ADP + H(+). In terms of biological role, LRR receptor kinase involved in positive regulation of somatic embryogenesis and defense response against the rice blast fungus pathogen Magnaporthe oryzae. Involved in the positive regulation of receptor kinase-mediated immunity. Required for immunity mediated by the LRR receptor kinases XA21 and XA26/XA3 which recognize effectors from the bacterial pathogen Xanthomonas oryzae pv. oryzae (Xoo). Required for the immune response mediated by the LRR receptor kinase FLS2 which recognizes specifically the bacterial flagellin (flg22) effector. Kinase activity and direct interaction with the immune receptors is critical for their function. Involved in the regulation of plant growth through the brassinosteroid (BR) signaling pathway. In Oryza sativa subsp. japonica (Rice), this protein is LRR receptor kinase SERK2.